The chain runs to 160 residues: Nascent polypeptide-associated complex subunit alpha (160 aa).

Positions 10 to 75 constitute an NAC-A/B domain; the sequence is TKGEKKTREA…HSFDDIASRL (66 aa). Residues 120-159 enclose the UBA domain; sequence VNPKDVEVVMKETKASREKVVETLIATKNDLVSAVLELTT.

It belongs to the NAC-alpha family. Part of the nascent polypeptide-associated complex (NAC), consisting of nacA and nacB.

It is found in the cytoplasm. It localises to the nucleus. Functionally, component of the nascent polypeptide-associated complex (NAC), a dynamic component of the ribosomal exit tunnel, protecting the emerging polypeptides from interaction with other cytoplasmic proteins to ensure appropriate nascent protein targeting. The NAC complex also promotes mitochondrial protein import by enhancing productive ribosome interactions with the outer mitochondrial membrane and blocks the inappropriate interaction of ribosomes translating non-secretory nascent polypeptides with translocation sites in the membrane of the endoplasmic reticulum. May also be involved in transcription regulation. The chain is Nascent polypeptide-associated complex subunit alpha (nacA) from Dictyostelium discoideum (Social amoeba).